We begin with the raw amino-acid sequence, 540 residues long: Chaperonin GroEL (540 aa).

ATP-binding positions include 29–32 (TLGP), 86–90 (DGTTT), G413, 478–480 (DAL), and D494.

It belongs to the chaperonin (HSP60) family. As to quaternary structure, forms a cylinder of 14 subunits composed of two heptameric rings stacked back-to-back. Interacts with the co-chaperonin GroES.

The protein resides in the cytoplasm. The catalysed reaction is ATP + H2O + a folded polypeptide = ADP + phosphate + an unfolded polypeptide.. In terms of biological role, together with its co-chaperonin GroES, plays an essential role in assisting protein folding. The GroEL-GroES system forms a nano-cage that allows encapsulation of the non-native substrate proteins and provides a physical environment optimized to promote and accelerate protein folding. This is Chaperonin GroEL from Clostridioides difficile (Peptoclostridium difficile).